We begin with the raw amino-acid sequence, 276 residues long: Small ribosomal subunit protein uS3 (276 aa).

Residues 39-110 (IRRETMKFFK…KINIKIKEIK (72 aa)) form the KH type-2 domain. A disordered region spans residues 218–243 (DAGQVINRKSSREKSEHFDRSRVDDR). Positions 227 to 243 (SSREKSEHFDRSRVDDR) are enriched in basic and acidic residues.

It belongs to the universal ribosomal protein uS3 family. Part of the 30S ribosomal subunit. Forms a tight complex with proteins S10 and S14.

Its function is as follows. Binds the lower part of the 30S subunit head. Binds mRNA in the 70S ribosome, positioning it for translation. This is Small ribosomal subunit protein uS3 from Borrelia hermsii (strain HS1 / DAH).